The primary structure comprises 183 residues: NEDD8-conjugating enzyme Ubc12 (183 aa).

Methionine 1 bears the N-acetylmethionine mark. The interval 1-28 (MIKLFSLKQQKKEEESAGGTKGSSKKAS) is disordered. Positions 29–173 (AAQLRIQKDI…VQRSMRGGYI (145 aa)) constitute a UBC core domain. The active-site Glycyl thioester intermediate is cysteine 111.

It belongs to the ubiquitin-conjugating enzyme family. UBC12 subfamily. In terms of processing, the acetylation of Met-1 increases affinity for DCUN1D1 by about 2 orders of magnitude and is crucial for NEDD8 transfer to cullins.

It catalyses the reaction [E1 NEDD8-activating enzyme]-S-[NEDD8 protein]-yl-L-cysteine + [E2 NEDD8-conjugating enzyme]-L-cysteine = [E1 NEDD8-activating enzyme]-L-cysteine + [E2 NEDD8-conjugating enzyme]-S-[NEDD8-protein]-yl-L-cysteine.. Its pathway is protein modification; protein neddylation. Its function is as follows. Accepts the ubiquitin-like protein NEDD8 from the UBA3-NAE1 E1 complex and catalyzes its covalent attachment to other proteins. The specific interaction with the E3 ubiquitin ligase rbx1, but not rbx2, suggests that the rbx1-ube2m complex neddylates specific target proteins, such as cul1, cul2, cul3 and cul4. Involved in cell proliferation. This Xenopus laevis (African clawed frog) protein is NEDD8-conjugating enzyme Ubc12 (ube2m).